Consider the following 219-residue polypeptide: Small ribosomal subunit protein uS4 (219 aa).

The region spanning R112 to H174 is the S4 RNA-binding domain. The segment at K193–R219 is disordered. Basic and acidic residues predominate over residues K199–G210.

This sequence belongs to the universal ribosomal protein uS4 family. Part of the 30S ribosomal subunit. Contacts protein S5. The interaction surface between S4 and S5 is involved in control of translational fidelity.

Functionally, one of the primary rRNA binding proteins, it binds directly to 16S rRNA where it nucleates assembly of the body of the 30S subunit. In terms of biological role, with S5 and S12 plays an important role in translational accuracy. This chain is Small ribosomal subunit protein uS4, found in Methanosarcina mazei (strain ATCC BAA-159 / DSM 3647 / Goe1 / Go1 / JCM 11833 / OCM 88) (Methanosarcina frisia).